The sequence spans 117 residues: Large ribosomal subunit protein uL18 (117 aa).

Belongs to the universal ribosomal protein uL18 family. Part of the 50S ribosomal subunit; part of the 5S rRNA/L5/L18/L25 subcomplex. Contacts the 5S and 23S rRNAs.

Functionally, this is one of the proteins that bind and probably mediate the attachment of the 5S RNA into the large ribosomal subunit, where it forms part of the central protuberance. This is Large ribosomal subunit protein uL18 from Vibrio campbellii (strain ATCC BAA-1116).